Consider the following 536-residue polypeptide: Zinc finger CCCH domain-containing protein 18 (536 aa).

The C3H1-type zinc-finger motif lies at 156–183 (EFPVKICHYFNKGFCKHGNNCRYFHGQI). Residues 211–294 (SLEKLEGEII…HGQHSVILAE (84 aa)) enclose the HTH OST-type domain. The RRM domain occupies 317-392 (RQIYLTFPAE…ARVLVKPYRE (76 aa)).

In terms of biological role, possesses ribonuclease activity in vitro. This is Zinc finger CCCH domain-containing protein 18 from Arabidopsis thaliana (Mouse-ear cress).